Here is a 484-residue protein sequence, read N- to C-terminus: Regulatory protein ViaA (484 aa).

The protein belongs to the ViaA family. Homodimer. Interacts with RavA.

The protein localises to the cytoplasm. In terms of biological role, component of the RavA-ViaA chaperone complex, which may act on the membrane to optimize the function of some of the respiratory chains. ViaA stimulates the ATPase activity of RavA. This chain is Regulatory protein ViaA, found in Edwardsiella ictaluri (strain 93-146).